The following is a 305-amino-acid chain: Homoserine kinase (305 aa).

93–103 (PLARGLGSSAT) serves as a coordination point for ATP.

It belongs to the GHMP kinase family. Homoserine kinase subfamily.

It localises to the cytoplasm. The enzyme catalyses L-homoserine + ATP = O-phospho-L-homoserine + ADP + H(+). It participates in amino-acid biosynthesis; L-threonine biosynthesis; L-threonine from L-aspartate: step 4/5. In terms of biological role, catalyzes the ATP-dependent phosphorylation of L-homoserine to L-homoserine phosphate. This chain is Homoserine kinase, found in Trichodesmium erythraeum (strain IMS101).